Consider the following 517-residue polypeptide: Protein ERGIC-53 (517 aa).

The signal sequence occupies residues 1–30 (MAVSRRRVPQAGARSFFCALLLSFSQFTGS). The Lumenal portion of the chain corresponds to 31–484 (DGTGGDAAAP…DLPPFPSCLS (454 aa)). One can recognise an L-type lectin-like domain in the interval 52–275 (RRFEYKYSFK…DVLSFLTFQL (224 aa)). Residues serine 96 and aspartate 129 each coordinate a carbohydrate. Residues aspartate 160, phenylalanine 162, and asparagine 164 each contribute to the Ca(2+) site. A carbohydrate-binding residues include asparagine 164 and histidine 186. Position 189 (aspartate 189) interacts with Ca(2+). Cysteine 198 and cysteine 238 form a disulfide bridge. 259–261 (GGL) contacts a carbohydrate. Serine 433 bears the Phosphoserine mark. Residues 485–505 (TIHFVIFVVVQTVLFVGYIMY) form a helical membrane-spanning segment. At 506–517 (RTQQEAAAKKFF) the chain is on the cytoplasmic side. The segment at 506–517 (RTQQEAAAKKFF) is mediates interaction with RAB3GAP1, RAB3GAP2 and UBXN6. The ER export motif signature appears at 516–517 (FF).

Exists both as a covalent disulfide-linked homohexamer, and a complex of three disulfide-linked dimers non-covalently kept together. Interacts with MCFD2. May interact with TMEM115. Interacts with RAB3GAP1 and RAB3GAP2. Interacts with UBXN6. Interacts with SERPINA1/alpha1-antitrypsin. Interacts with BET1.

Its subcellular location is the endoplasmic reticulum-Golgi intermediate compartment membrane. The protein resides in the golgi apparatus membrane. It localises to the endoplasmic reticulum membrane. In terms of biological role, mannose-specific lectin. May recognize sugar residues of glycoproteins, glycolipids, or glycosylphosphatidyl inositol anchors and may be involved in the sorting or recycling of proteins, lipids, or both. The LMAN1-MCFD2 complex forms a specific cargo receptor for the ER-to-Golgi transport of selected proteins. This chain is Protein ERGIC-53 (Lman1), found in Mus musculus (Mouse).